The sequence spans 897 residues: Echinoderm microtubule-associated protein-like 3 (897 aa).

Position 1 is an N-acetylmethionine (Met1). Residues 16–43 (LQTLSQRLRVQEEEMELVKAALAEALRL) are a coiled coil. A compositionally biased stretch (polar residues) spans 51 to 68 (TTLQGSGISAPTRNSSIT). The interval 51–210 (TTLQGSGISA…GGPGSRRSNY (160 aa)) is disordered. Low complexity-rich tracts occupy residues 96–108 (PSSG…NGPP), 118–132 (SGTQ…SSGA), and 155–164 (RNSSSSSSPS). The segment covering 175–190 (AASSANLLLRSGSTES) has biased composition (polar residues). Ser177, Ser199, and Ser205 each carry phosphoserine. WD repeat units lie at residues 235 to 287 (RSLE…LYRP), 296 to 345 (GGGQ…IWDS), 351 to 393 (LQEI…VWDC), 399 to 435 (LAEI…FWNW), 449 to 488 (RKQG…TWGR), 505 to 544 (YTIV…QWGP), 550 to 585 (QEAE…LRGD), 590 to 627 (FSPV…LWDG), 630 to 668 (HALA…VLDT), 675 to 710 (SDVT…IYSV), 717 to 756 (SSRF…YWDV), 766 to 824 (RYES…LFQY), and 831 to 870 (APSR…QWRV). The interval 876 to 897 (SGPAPATPSRTPSLSPASSLDV) is disordered. At Thr882 the chain carries Phosphothreonine; by CDK1. Residues 883-897 (PSRTPSLSPASSLDV) are compositionally biased toward polar residues. Ser884 is subject to Phosphoserine.

It belongs to the WD repeat EMAP family. In terms of assembly, homotrimer; self-association is mediated by the N-terminal coiled coil. Interacts with EML2 but not with EML1. Interacts (phosphorylated at Thr-882) with TUBG1, HAUS1, HAUS2, HAUS3, HAUS4, HAUS5, HAUS6, HAUS7 and HAUS8. Post-translationally, phosphorylation at Thr-882 during mitosis is required for interaction with TUBG1, HAUS1, HAUS2, HAUS3, HAUS4, HAUS5, HAUS6, HAUS7 and HAUS8 and their recruitment to spindle microtubules.

Its subcellular location is the cytoplasm. It is found in the cytoskeleton. It localises to the nucleus. The protein localises to the midbody. The protein resides in the spindle. Regulates mitotic spindle assembly, microtubule (MT)-kinetochore attachment and chromosome separation via recruitment of HAUS augmin-like complex and TUBG1 to the existing MTs and promoting MT-based MT nucleation. Required for proper alignnment of chromosomes during metaphase. In Mus musculus (Mouse), this protein is Echinoderm microtubule-associated protein-like 3 (Eml3).